We begin with the raw amino-acid sequence, 151 residues long: Regulatory protein RecX (151 aa).

It belongs to the RecX family.

The protein resides in the cytoplasm. Functionally, modulates RecA activity. In Haemophilus ducreyi (strain 35000HP / ATCC 700724), this protein is Regulatory protein RecX.